The chain runs to 175 residues: Co-chaperone protein HscB homolog (175 aa).

The J domain maps to 7–79; it reads SHFDLFHLPA…LQRASYLLSL (73 aa).

This sequence belongs to the HscB family. Interacts with HscA and stimulates its ATPase activity.

In terms of biological role, co-chaperone involved in the maturation of iron-sulfur cluster-containing proteins. Seems to help targeting proteins to be folded toward HscA. The protein is Co-chaperone protein HscB homolog of Burkholderia vietnamiensis (strain G4 / LMG 22486) (Burkholderia cepacia (strain R1808)).